The chain runs to 190 residues: Holliday junction branch migration complex subunit RuvA (190 aa).

A domain I region spans residues 1-65 (MIGTLSGTVE…DGVSQLYGFA (65 aa)). Residues 66–137 (NREEQNCMRM…LTPQVQKFEL (72 aa)) are domain II. The flexible linker stretch occupies residues 137 to 141 (LNRFA). The segment at 142-190 (ATTRTDSEAVAALLSLGYERTAALGALQKVGVCDSTEDAVRRALLELSK) is domain III.

It belongs to the RuvA family. As to quaternary structure, homotetramer. Forms an RuvA(8)-RuvB(12)-Holliday junction (HJ) complex. HJ DNA is sandwiched between 2 RuvA tetramers; dsDNA enters through RuvA and exits via RuvB. An RuvB hexamer assembles on each DNA strand where it exits the tetramer. Each RuvB hexamer is contacted by two RuvA subunits (via domain III) on 2 adjacent RuvB subunits; this complex drives branch migration. In the full resolvosome a probable DNA-RuvA(4)-RuvB(12)-RuvC(2) complex forms which resolves the HJ.

It is found in the cytoplasm. In terms of biological role, the RuvA-RuvB-RuvC complex processes Holliday junction (HJ) DNA during genetic recombination and DNA repair, while the RuvA-RuvB complex plays an important role in the rescue of blocked DNA replication forks via replication fork reversal (RFR). RuvA specifically binds to HJ cruciform DNA, conferring on it an open structure. The RuvB hexamer acts as an ATP-dependent pump, pulling dsDNA into and through the RuvAB complex. HJ branch migration allows RuvC to scan DNA until it finds its consensus sequence, where it cleaves and resolves the cruciform DNA. The protein is Holliday junction branch migration complex subunit RuvA of Anaplasma marginale (strain Florida).